We begin with the raw amino-acid sequence, 127 residues long: Small ribosomal subunit protein uS12 (127 aa).

D89 carries the 3-methylthioaspartic acid modification.

It belongs to the universal ribosomal protein uS12 family. In terms of assembly, part of the 30S ribosomal subunit. Contacts proteins S8 and S17. May interact with IF1 in the 30S initiation complex.

In terms of biological role, with S4 and S5 plays an important role in translational accuracy. Interacts with and stabilizes bases of the 16S rRNA that are involved in tRNA selection in the A site and with the mRNA backbone. Located at the interface of the 30S and 50S subunits, it traverses the body of the 30S subunit contacting proteins on the other side and probably holding the rRNA structure together. The combined cluster of proteins S8, S12 and S17 appears to hold together the shoulder and platform of the 30S subunit. In Aliarcobacter butzleri (strain RM4018) (Arcobacter butzleri), this protein is Small ribosomal subunit protein uS12.